The following is a 267-amino-acid chain: Small ribosomal subunit protein uS3 (267 aa).

Positions 43–111 (IRKEMSKDLE…QVQLNIFEVK (69 aa)) constitute a KH type-2 domain. Residues 216–267 (FEEQQAQQNNRPGRRGGDRRPRRGNRSAAPQAAEAPKAEAPAEAAPAAETKE) form a disordered region. The segment covering 241–267 (RSAAPQAAEAPKAEAPAEAAPAAETKE) has biased composition (low complexity).

Belongs to the universal ribosomal protein uS3 family. As to quaternary structure, part of the 30S ribosomal subunit. Forms a tight complex with proteins S10 and S14.

Its function is as follows. Binds the lower part of the 30S subunit head. Binds mRNA in the 70S ribosome, positioning it for translation. This chain is Small ribosomal subunit protein uS3, found in Bifidobacterium longum (strain DJO10A).